We begin with the raw amino-acid sequence, 345 residues long: Transcription factor 19 (345 aa).

One can recognise an FHA domain in the interval 31-88; sequence YRLGHRADLCDVALRPQQEPGLISGIHAELHAEPRGDDWRVSLEDHSSQGTLVNNVRL. Serine 78 carries the phosphoserine modification. Disordered regions lie at residues 147-167 and 190-227; these read AGFR…STLS and LTFS…RKSV. The PHD-type zinc-finger motif lies at 293 to 342; that stretch reads AAPCCCLPQEETVAWVQCDGCDVWFHVACVGCSIQAAREADFRCPGCRAG. Zn(2+) contacts are provided by cysteine 296, cysteine 298, cysteine 310, cysteine 313, histidine 318, cysteine 321, cysteine 336, and cysteine 339.

It localises to the nucleus. Functionally, potential transcription factor that may play a role in the regulation of genes involved in cell cycle G1/S transition. May bind to regulatory elements of genes, including the promoter of the transcription factor FOXO1. In Pan troglodytes (Chimpanzee), this protein is Transcription factor 19 (TCF19).